Here is a 481-residue protein sequence, read N- to C-terminus: MTFRFDNSYARDLEGFYVDWPAAPVPAPRLLRLNRPLAEELGLDPDLLEREGAEIFSGRRLPEGAHPLAQAYAGHQFGGFSPQLGDGRALLIGEITDRAGRRRDLQLKGSGRTPFSRGADGKAALGPVLREYLVGEAMHGLGIPTTRALAAVATGEPLLRQEGERPGAILTRVAASHIRVGTFQFFAARSDIDRVRRLADYAIARHYPELASAPEPYLAFYEAVAEAQAQLVARWMLVGFIHGVMNTDNMTISGETIDYGPCAFMEGYDPGTVFSSIDLQGRYAYGNQPYILAWNLARLGEALLPLLDADAERATDKANSVLETVGARYQGHWLAGMRAKLGLAGAEEGDARLAEDLLEAMRNQRADWTLTFRRLAEAVTDEGTLRPLFRDPAALEAWLPRWRARLAPDAAERMRATNPIYIARNHRVEEALAAAHAGDLAPFDRLLEALADPFTERADRELFALPAPEGFDDSYRTFCGT.

Residues Gly-85, Gly-87, Arg-88, Lys-108, Asp-120, Gly-121, Arg-172, and Arg-179 each coordinate ATP. The Proton acceptor role is filled by Asp-248. Mg(2+) is bound by residues Asn-249 and Asp-258. Asp-258 is an ATP binding site.

This sequence belongs to the SELO family. Mg(2+) serves as cofactor. The cofactor is Mn(2+).

The catalysed reaction is L-seryl-[protein] + ATP = 3-O-(5'-adenylyl)-L-seryl-[protein] + diphosphate. The enzyme catalyses L-threonyl-[protein] + ATP = 3-O-(5'-adenylyl)-L-threonyl-[protein] + diphosphate. It carries out the reaction L-tyrosyl-[protein] + ATP = O-(5'-adenylyl)-L-tyrosyl-[protein] + diphosphate. It catalyses the reaction L-histidyl-[protein] + UTP = N(tele)-(5'-uridylyl)-L-histidyl-[protein] + diphosphate. The catalysed reaction is L-seryl-[protein] + UTP = O-(5'-uridylyl)-L-seryl-[protein] + diphosphate. The enzyme catalyses L-tyrosyl-[protein] + UTP = O-(5'-uridylyl)-L-tyrosyl-[protein] + diphosphate. In terms of biological role, nucleotidyltransferase involved in the post-translational modification of proteins. It can catalyze the addition of adenosine monophosphate (AMP) or uridine monophosphate (UMP) to a protein, resulting in modifications known as AMPylation and UMPylation. The protein is Protein nucleotidyltransferase YdiU of Cereibacter sphaeroides (strain KD131 / KCTC 12085) (Rhodobacter sphaeroides).